The chain runs to 406 residues: Bifunctional enzyme IspD/IspF (406 aa).

Positions 1 to 247 (MSLIRVNGEA…ALFFNPAKDT (247 aa)) are 2-C-methyl-D-erythritol 4-phosphate cytidylyltransferase. The interval 248–406 (FIGMGFDTHA…HVSMRYKQKL (159 aa)) is 2-C-methyl-D-erythritol 2,4-cyclodiphosphate synthase. A divalent metal cation-binding residues include Asp-254 and His-256. 4-CDP-2-C-methyl-D-erythritol 2-phosphate is bound by residues 254–256 (DTH) and 280–281 (HS). His-288 is an a divalent metal cation binding site. 4-CDP-2-C-methyl-D-erythritol 2-phosphate is bound by residues 302 to 304 (DIG), 307 to 311 (FPDND), 378 to 381 (TTME), Phe-385, and Lys-388.

In the N-terminal section; belongs to the IspD/TarI cytidylyltransferase family. IspD subfamily. This sequence in the C-terminal section; belongs to the IspF family. The cofactor is a divalent metal cation.

The enzyme catalyses 2-C-methyl-D-erythritol 4-phosphate + CTP + H(+) = 4-CDP-2-C-methyl-D-erythritol + diphosphate. It carries out the reaction 4-CDP-2-C-methyl-D-erythritol 2-phosphate = 2-C-methyl-D-erythritol 2,4-cyclic diphosphate + CMP. Its pathway is isoprenoid biosynthesis; isopentenyl diphosphate biosynthesis via DXP pathway; isopentenyl diphosphate from 1-deoxy-D-xylulose 5-phosphate: step 2/6. It participates in isoprenoid biosynthesis; isopentenyl diphosphate biosynthesis via DXP pathway; isopentenyl diphosphate from 1-deoxy-D-xylulose 5-phosphate: step 4/6. Functionally, bifunctional enzyme that catalyzes the formation of 4-diphosphocytidyl-2-C-methyl-D-erythritol from CTP and 2-C-methyl-D-erythritol 4-phosphate (MEP) (IspD), and catalyzes the conversion of 4-diphosphocytidyl-2-C-methyl-D-erythritol 2-phosphate (CDP-ME2P) to 2-C-methyl-D-erythritol 2,4-cyclodiphosphate (ME-CPP) with a corresponding release of cytidine 5-monophosphate (CMP) (IspF). In Helicobacter pylori (strain P12), this protein is Bifunctional enzyme IspD/IspF.